Reading from the N-terminus, the 294-residue chain is Tryptophan 2,3-dioxygenase 1 (294 aa).

A disordered region spans residues methionine 1–alanine 20. Substrate-binding positions include phenylalanine 63–histidine 67, tyrosine 125, and arginine 129. Histidine 252 lines the heme pocket. Threonine 266 lines the substrate pocket.

Belongs to the tryptophan 2,3-dioxygenase family. In terms of assembly, homotetramer. The cofactor is heme.

The catalysed reaction is L-tryptophan + O2 = N-formyl-L-kynurenine. It participates in amino-acid degradation; L-tryptophan degradation via kynurenine pathway; L-kynurenine from L-tryptophan: step 1/2. In terms of biological role, heme-dependent dioxygenase that catalyzes the oxidative cleavage of the L-tryptophan (L-Trp) pyrrole ring and converts L-tryptophan to N-formyl-L-kynurenine. Catalyzes the oxidative cleavage of the indole moiety. The sequence is that of Tryptophan 2,3-dioxygenase 1 from Ralstonia nicotianae (strain ATCC BAA-1114 / GMI1000) (Ralstonia solanacearum).